Consider the following 312-residue polypeptide: Ribosomal protein L11 methyltransferase (312 aa).

Threonine 162, glycine 183, aspartate 205, and asparagine 248 together coordinate S-adenosyl-L-methionine.

The protein belongs to the methyltransferase superfamily. PrmA family.

Its subcellular location is the cytoplasm. It catalyses the reaction L-lysyl-[protein] + 3 S-adenosyl-L-methionine = N(6),N(6),N(6)-trimethyl-L-lysyl-[protein] + 3 S-adenosyl-L-homocysteine + 3 H(+). In terms of biological role, methylates ribosomal protein L11. This chain is Ribosomal protein L11 methyltransferase, found in Bacillus cereus (strain G9842).